The chain runs to 550 residues: Coiled-coil domain-containing protein 60 (550 aa).

Residues 1–21 are disordered; sequence MTKVPATKKLQSSPNSGAVRP. A coiled-coil region spans residues 71–98; that stretch reads AILREETAKKKKQQQLQKLKEEERNKFQ. 2 disordered regions span residues 219-293 and 336-367; these read KFKI…EPLY and AYKEMQTTLKSSERSSSTSAESHIQPVQKKSK. A compositionally biased stretch (low complexity) spans 235 to 256; sequence RGSTLSLSRASGGSSPQSSMIS. Residues 336–345 show a composition bias toward polar residues; it reads AYKEMQTTLK.

In Homo sapiens (Human), this protein is Coiled-coil domain-containing protein 60 (CCDC60).